The chain runs to 474 residues: Glycogen synthase (474 aa).

K15 contributes to the ADP-alpha-D-glucose binding site.

Belongs to the glycosyltransferase 1 family. Bacterial/plant glycogen synthase subfamily.

The enzyme catalyses [(1-&gt;4)-alpha-D-glucosyl](n) + ADP-alpha-D-glucose = [(1-&gt;4)-alpha-D-glucosyl](n+1) + ADP + H(+). Its pathway is glycan biosynthesis; glycogen biosynthesis. Functionally, synthesizes alpha-1,4-glucan chains using ADP-glucose. The protein is Glycogen synthase of Chlamydia trachomatis serovar D (strain ATCC VR-885 / DSM 19411 / UW-3/Cx).